Here is a 475-residue protein sequence, read N- to C-terminus: Lipoprotein lipase (475 aa).

The first 27 residues, 1-27 (MESKALLVLTLAVWLQSLTASRGGVAA), serve as a signal peptide directing secretion. Positions 32–53 (RDFIDIESKFALRTPEDTAEDT) are interaction with GPIHBP1. Residues cysteine 54 and cysteine 67 are joined by a disulfide bond. Asparagine 70 is a glycosylation site (N-linked (GlcNAc...) asparagine). Tyrosine 121 bears the 3'-nitrotyrosine mark. The Nucleophile role is filled by serine 159. Aspartate 183 functions as the Charge relay system in the catalytic mechanism. Position 191 is a 3'-nitrotyrosine (tyrosine 191). Ca(2+)-binding residues include alanine 194, arginine 197, serine 199, and aspartate 202. Cysteines 243 and 266 form a disulfide. Residues 243–266 (CNIGEAIRVIAERGLGDVDQLVKC) are essential for determining substrate specificity. The active-site Charge relay system is the histidine 268. 2 disulfide bridges follow: cysteine 291–cysteine 310 and cysteine 302–cysteine 305. Residues 341-464 (FHYQVKIHFS…KGKAPAVFVK (124 aa)) form the PLAT domain. Tyrosine 343 bears the 3'-nitrotyrosine mark. The N-linked (GlcNAc...) asparagine glycan is linked to asparagine 386. Residues 417 to 421 (WSDWW) form an important for interaction with lipoprotein particles region. Positions 430-434 (KIRVK) are important for heparin binding. Residues 443–467 (IFCSREKVSHLQKGKAPAVFVKCHD) are interaction with GPIHBP1. An intrachain disulfide couples cysteine 445 to cysteine 465.

It belongs to the AB hydrolase superfamily. Lipase family. Homodimer. Interacts with GPIHBP1 with 1:1 stoichiometry. Interacts with APOC2; the interaction activates LPL activity in the presence of lipids. Interaction with heparan sulfate proteoglycans is required to protect LPL against loss of activity. Associates with lipoprotein particles in blood plasma. Interacts with LMF1 and SEL1L; interaction with SEL1L is required to prevent aggregation of newly synthesized LPL in the endoplasmic reticulum (ER), and for normal export of LPL from the ER to the extracellular space. Interacts with SORL1; SORL1 acts as a sorting receptor, promoting LPL localization to endosomes and later to lysosomes, leading to degradation of newly synthesized LPL. In terms of processing, tyrosine nitration after lipopolysaccharide (LPS) challenge down-regulates the lipase activity. As to expression, detected in blood plasma. Detected in milk (at protein level).

It is found in the cell membrane. The protein resides in the secreted. The protein localises to the extracellular space. Its subcellular location is the extracellular matrix. The catalysed reaction is a triacylglycerol + H2O = a diacylglycerol + a fatty acid + H(+). The enzyme catalyses a 1,2-diacyl-sn-glycero-3-phosphocholine + H2O = a 2-acyl-sn-glycero-3-phosphocholine + a fatty acid + H(+). It carries out the reaction 1,2,3-tri-(9Z-octadecenoyl)-glycerol + H2O = di-(9Z)-octadecenoylglycerol + (9Z)-octadecenoate + H(+). It catalyses the reaction 1,2-di-(9Z-octadecenoyl)-sn-glycero-3-phosphocholine + H2O = (9Z-octadecenoyl)-sn-glycero-3-phosphocholine + (9Z)-octadecenoate + H(+). The catalysed reaction is 1,2,3-tributanoylglycerol + H2O = dibutanoylglycerol + butanoate + H(+). The enzyme catalyses 1,2-dihexadecanoyl-sn-glycero-3-phosphocholine + H2O = hexadecanoyl-sn-glycero-3-phosphocholine + hexadecanoate + H(+). Its activity is regulated as follows. The apolipoprotein APOC2 acts as a coactivator of LPL activity. Ca(2+) binding promotes protein stability and formation of the active homodimer. Interaction with GPIHBP1 protects LPL against inactivation by ANGPTL4. Inhibited by NaCl. Functionally, key enzyme in triglyceride metabolism. Catalyzes the hydrolysis of triglycerides from circulating chylomicrons and very low density lipoproteins (VLDL), and thereby plays an important role in lipid clearance from the blood stream, lipid utilization and storage. Although it has both phospholipase and triglyceride lipase activities it is primarily a triglyceride lipase with low but detectable phospholipase activity. Mediates margination of triglyceride-rich lipoprotein particles in capillaries. Recruited to its site of action on the luminal surface of vascular endothelium by binding to GPIHBP1 and cell surface heparan sulfate proteoglycans. The sequence is that of Lipoprotein lipase (LPL) from Homo sapiens (Human).